The following is a 332-amino-acid chain: UPF0194 membrane protein YbhG (332 aa).

The first 16 residues, 1 to 16 (MMKKPVVIGLAVVVLA), serve as a signal peptide directing secretion. Residues 108 to 209 (EEIAQAAAAV…LNLQDSTLIA (102 aa)) adopt a coiled-coil conformation.

This sequence belongs to the UPF0194 family.

It localises to the periplasm. The chain is UPF0194 membrane protein YbhG from Escherichia coli O45:K1 (strain S88 / ExPEC).